The following is a 255-amino-acid chain: Na(+)-translocating NADH-quinone reductase subunit C (255 aa).

Residues 12–32 (LFVVIALSLVCSIIVSTAAVG) traverse the membrane as a helical segment. At Thr-223 the chain carries FMN phosphoryl threonine.

It belongs to the NqrC family. As to quaternary structure, composed of six subunits; NqrA, NqrB, NqrC, NqrD, NqrE and NqrF. FMN serves as cofactor.

It is found in the cell inner membrane. It carries out the reaction a ubiquinone + n Na(+)(in) + NADH + H(+) = a ubiquinol + n Na(+)(out) + NAD(+). Functionally, NQR complex catalyzes the reduction of ubiquinone-1 to ubiquinol by two successive reactions, coupled with the transport of Na(+) ions from the cytoplasm to the periplasm. NqrA to NqrE are probably involved in the second step, the conversion of ubisemiquinone to ubiquinol. The protein is Na(+)-translocating NADH-quinone reductase subunit C of Vibrio anguillarum (Listonella anguillarum).